The following is a 391-amino-acid chain: uncharacterized protein (391 aa).

Residues Ala-247 to Ala-387 enclose the Flavodoxin-like domain.

This is an uncharacterized protein from Methanocaldococcus jannaschii (strain ATCC 43067 / DSM 2661 / JAL-1 / JCM 10045 / NBRC 100440) (Methanococcus jannaschii).